The primary structure comprises 629 residues: Chaperone protein HtpG (629 aa).

The segment at 1-335 (MSEVETSVEK…TADLPLNVSR (335 aa)) is a; substrate-binding. Residues 336-551 (EMIQESPLLA…EQGPDRQLQK (216 aa)) form a b region. The interval 552 to 629 (MLQDAGRIEG…SRVFGRALKE (78 aa)) is c.

This sequence belongs to the heat shock protein 90 family. In terms of assembly, homodimer.

It localises to the cytoplasm. Its function is as follows. Molecular chaperone. Has ATPase activity. The sequence is that of Chaperone protein HtpG from Rhizobium meliloti (strain 1021) (Ensifer meliloti).